We begin with the raw amino-acid sequence, 497 residues long: Glycerol kinase (497 aa).

Thr-12 serves as a coordination point for ADP. Residues Thr-12, Thr-13, and Ser-14 each contribute to the ATP site. Residue Thr-12 participates in sn-glycerol 3-phosphate binding. Position 16 (Arg-16) interacts with ADP. Sn-glycerol 3-phosphate-binding residues include Arg-82, Glu-83, Tyr-133, and Asp-243. Glycerol is bound by residues Arg-82, Glu-83, Tyr-133, Asp-243, and Gln-244. Residues Thr-265 and Gly-308 each coordinate ADP. ATP is bound by residues Thr-265, Gly-308, Gln-312, and Gly-409. Gly-409 serves as a coordination point for ADP.

This sequence belongs to the FGGY kinase family.

The enzyme catalyses glycerol + ATP = sn-glycerol 3-phosphate + ADP + H(+). It functions in the pathway polyol metabolism; glycerol degradation via glycerol kinase pathway; sn-glycerol 3-phosphate from glycerol: step 1/1. Its activity is regulated as follows. Inhibited by fructose 1,6-bisphosphate (FBP). Key enzyme in the regulation of glycerol uptake and metabolism. Catalyzes the phosphorylation of glycerol to yield sn-glycerol 3-phosphate. The polypeptide is Glycerol kinase (Dichelobacter nodosus (strain VCS1703A)).